The following is a 278-amino-acid chain: Putative phosphoenolpyruvate synthase regulatory protein (278 aa).

An ADP-binding site is contributed by 158 to 165; that stretch reads GVSRSGKT.

It belongs to the pyruvate, phosphate/water dikinase regulatory protein family. PSRP subfamily.

The catalysed reaction is [pyruvate, water dikinase] + ADP = [pyruvate, water dikinase]-phosphate + AMP + H(+). It catalyses the reaction [pyruvate, water dikinase]-phosphate + phosphate + H(+) = [pyruvate, water dikinase] + diphosphate. In terms of biological role, bifunctional serine/threonine kinase and phosphorylase involved in the regulation of the phosphoenolpyruvate synthase (PEPS) by catalyzing its phosphorylation/dephosphorylation. This Acinetobacter baumannii (strain AYE) protein is Putative phosphoenolpyruvate synthase regulatory protein.